A 296-amino-acid chain; its full sequence is Glycine--tRNA ligase alpha subunit (296 aa).

This sequence belongs to the class-II aminoacyl-tRNA synthetase family. In terms of assembly, tetramer of two alpha and two beta subunits.

Its subcellular location is the cytoplasm. The catalysed reaction is tRNA(Gly) + glycine + ATP = glycyl-tRNA(Gly) + AMP + diphosphate. The chain is Glycine--tRNA ligase alpha subunit from Francisella tularensis subsp. holarctica (strain FTNF002-00 / FTA).